The following is a 110-amino-acid chain: Large ribosomal subunit protein P1B (110 aa).

Over residues 69–85 (PAAGGAGAPAAAAGGEA) the composition is skewed to low complexity. The disordered stretch occupies residues 69–110 (PAAGGAGAPAAAAGGEAAAEEQKEEAKEEEESDEDMGFGLFD). Residues 95 to 104 (KEEEESDEDM) are compositionally biased toward acidic residues.

It belongs to the eukaryotic ribosomal protein P1/P2 family. Component of the large ribosomal subunit (LSU). Mature yeast ribosomes consist of a small (40S) and a large (60S) subunit. The 40S small subunit contains 1 molecule of ribosomal RNA (18S rRNA) and at least 33 different proteins. The large 60S subunit contains 3 rRNA molecules (25S, 5.8S and 5S rRNA) and at least 46 different proteins. The acidic ribosomal P-proteins form the stalk structure of the 60S subunit. They are organized as a pentameric complex in which uL10/P0 interacts with 2 heterodimers of P1 and P2 proteins.

The protein resides in the cytoplasm. Functionally, component of the ribosome, a large ribonucleoprotein complex responsible for the synthesis of proteins in the cell. The small ribosomal subunit (SSU) binds messenger RNAs (mRNAs) and translates the encoded message by selecting cognate aminoacyl-transfer RNA (tRNA) molecules. The large subunit (LSU) contains the ribosomal catalytic site termed the peptidyl transferase center (PTC), which catalyzes the formation of peptide bonds, thereby polymerizing the amino acids delivered by tRNAs into a polypeptide chain. The nascent polypeptides leave the ribosome through a tunnel in the LSU and interact with protein factors that function in enzymatic processing, targeting, and the membrane insertion of nascent chains at the exit of the ribosomal tunnel. This Schizosaccharomyces pombe (strain 972 / ATCC 24843) (Fission yeast) protein is Large ribosomal subunit protein P1B (rpp102).